Here is a 360-residue protein sequence, read N- to C-terminus: DNA replication and repair protein RecF (360 aa).

30–37 serves as a coordination point for ATP; the sequence is GHNGSGKT.

This sequence belongs to the RecF family.

It localises to the cytoplasm. Its function is as follows. The RecF protein is involved in DNA metabolism; it is required for DNA replication and normal SOS inducibility. RecF binds preferentially to single-stranded, linear DNA. It also seems to bind ATP. The protein is DNA replication and repair protein RecF of Shewanella denitrificans (strain OS217 / ATCC BAA-1090 / DSM 15013).